The chain runs to 536 residues: CTP synthase (536 aa).

Positions M1–L267 are amidoligase domain. S13 contributes to the CTP binding site. A UTP-binding site is contributed by S13. ATP-binding positions include S14–I19 and D71. Mg(2+) is bound by residues D71 and E141. CTP-binding positions include D148 to E150, K188 to Q193, and K224. Residues K188–Q193 and K224 contribute to the UTP site. A Glutamine amidotransferase type-1 domain is found at K292–Q534. G354 contributes to the L-glutamine binding site. C381 serves as the catalytic Nucleophile; for glutamine hydrolysis. L-glutamine-binding positions include L382 to Q385, E405, and R462. Catalysis depends on residues H507 and E509.

It belongs to the CTP synthase family. In terms of assembly, homotetramer.

It catalyses the reaction UTP + L-glutamine + ATP + H2O = CTP + L-glutamate + ADP + phosphate + 2 H(+). The catalysed reaction is L-glutamine + H2O = L-glutamate + NH4(+). The enzyme catalyses UTP + NH4(+) + ATP = CTP + ADP + phosphate + 2 H(+). Its pathway is pyrimidine metabolism; CTP biosynthesis via de novo pathway; CTP from UDP: step 2/2. With respect to regulation, allosterically activated by GTP, when glutamine is the substrate; GTP has no effect on the reaction when ammonia is the substrate. The allosteric effector GTP functions by stabilizing the protein conformation that binds the tetrahedral intermediate(s) formed during glutamine hydrolysis. Inhibited by the product CTP, via allosteric rather than competitive inhibition. Catalyzes the ATP-dependent amination of UTP to CTP with either L-glutamine or ammonia as the source of nitrogen. Regulates intracellular CTP levels through interactions with the four ribonucleotide triphosphates. This is CTP synthase from Prochlorococcus marinus (strain MIT 9301).